The chain runs to 1695 residues: Sialoadhesin (1695 aa).

Residues methionine 1–threonine 19 form the signal peptide. The Ig-like V-type domain maps to threonine 20–threonine 136. The Extracellular segment spans residues threonine 20–arginine 1639. 4 cysteine pairs are disulfide-bonded: cysteine 36-cysteine 166, cysteine 41-cysteine 98, cysteine 160-cysteine 218, and cysteine 263-cysteine 306. Residues tyrosine 63, arginine 116, and serine 122–leucine 126 contribute to the N-acetylneuraminate site. Ig-like C2-type domains are found at residues glycine 153–valine 235, proline 239–serine 321, methionine 326–serine 406, proline 416–tyrosine 508, alanine 509–threonine 594, proline 602–asparagine 701, alanine 704–serine 781, proline 795–arginine 890, valine 894–serine 973, proline 980–aspartate 1079, glutamine 1081–threonine 1161, arginine 1172–serine 1264, lysine 1245–glutamine 1337, proline 1342–threonine 1439, aspartate 1442–serine 1520, and proline 1534–glycine 1627. The N-linked (GlcNAc...) asparagine glycan is linked to asparagine 159. Asparagine 266, asparagine 299, and asparagine 340 each carry an N-linked (GlcNAc...) asparagine glycan. Disulfide bonds link cysteine 347–cysteine 391 and cysteine 434–cysteine 492. The N-linked (GlcNAc...) asparagine glycan is linked to asparagine 500. Cysteine 532 and cysteine 576 are joined by a disulfide. The N-linked (GlcNAc...) asparagine glycan is linked to asparagine 583. Cysteine 625 and cysteine 685 form a disulfide bridge. Residues asparagine 693, asparagine 722, and asparagine 737 are each glycosylated (N-linked (GlcNAc...) asparagine). Cystine bridges form between cysteine 725/cysteine 770 and cysteine 813/cysteine 872. The Cell attachment site motif lies at arginine 827–aspartate 829. Asparagine 882 is a glycosylation site (N-linked (GlcNAc...) asparagine). Cystine bridges form between cysteine 912/cysteine 956 and cysteine 1001/cysteine 1063. Residues asparagine 1090 and asparagine 1100 are each glycosylated (N-linked (GlcNAc...) asparagine). Disulfide bonds link cysteine 1103–cysteine 1145 and cysteine 1189–cysteine 1237. Asparagine 1247 is a glycosylation site (N-linked (GlcNAc...) asparagine). 2 disulfides stabilise this stretch: cysteine 1277-cysteine 1320 and cysteine 1363-cysteine 1422. 2 N-linked (GlcNAc...) asparagine glycosylation sites follow: asparagine 1460 and asparagine 1474. Intrachain disulfides connect cysteine 1463/cysteine 1509 and cysteine 1552/cysteine 1611. The chain crosses the membrane as a helical span at residues leucine 1640–tyrosine 1660. Over histidine 1661–leucine 1695 the chain is Cytoplasmic.

This sequence belongs to the immunoglobulin superfamily. SIGLEC (sialic acid binding Ig-like lectin) family. As to quaternary structure, interacts with CLEC10A. Detected in lymph node in the subcapsular sinus, interfollicular regions, and T and B-cell boundary (at protein level). Expressed by macrophages in various tissues. Highest expression in spleen and lymph node with lower amounts in lung, liver, bone marrow, heart and skin. No expression in thymus, kidney, brain or small intestine.

The protein localises to the cell membrane. It is found in the secreted. In terms of biological role, macrophage-restricted adhesion molecule that mediates sialic-acid dependent binding to lymphocytes, including granulocytes, monocytes, natural killer cells, B-cells and CD8 T-cells. Plays a crucial role in limiting bacterial dissemination by engaging sialylated bacteria to promote effective phagocytosis and antigen presentation for the adaptive immune response. Mediates the uptake of various enveloped viruses via sialic acid recognition and subsequently induces the formation of intracellular compartments filled with virions (VCCs). In turn, enhances macrophage-to-T-cell transmission of several viruses including murine leukemia virus. Acts as an endocytic receptor mediating clathrin dependent endocytosis. Preferentially binds to alpha-2,3-linked sialic acid. Binds to SPN/CD43 on T-cells. May play a role in hemopoiesis. Plays a role in the inhibition of antiviral innate immune by promoting TBK1 degradation via TYROBP and TRIM27-mediated ubiquitination. The polypeptide is Sialoadhesin (Siglec1) (Mus musculus (Mouse)).